The following is a 298-amino-acid chain: Protoheme IX farnesyltransferase (298 aa).

The next 9 helical transmembrane spans lie at 16-36 (VVALIVFTALVGMFLAIPDMP), 45-65 (ALGFLGIWLAASAAAAINQLL), 93-113 (VFAGALIVISMTILVVWVNVI), 114-134 (TAVLTFASLIGYAVIYTVYLK), 141-161 (IVIGGLAGATPPMLGWAAVTG), 172-192 (SLLVLIIFIWTPPHFWALAIF), 223-243 (VLLAIVTLLPVTVGMSGVFYL), 244-264 (GGAVVLNAVFLWYAWRMLNPP), and 277-297 (IVYLMALFAFLMVDHLLLPWV).

Belongs to the UbiA prenyltransferase family. Protoheme IX farnesyltransferase subfamily.

The protein localises to the cell inner membrane. It carries out the reaction heme b + (2E,6E)-farnesyl diphosphate + H2O = Fe(II)-heme o + diphosphate. It participates in porphyrin-containing compound metabolism; heme O biosynthesis; heme O from protoheme: step 1/1. Converts heme B (protoheme IX) to heme O by substitution of the vinyl group on carbon 2 of heme B porphyrin ring with a hydroxyethyl farnesyl side group. The chain is Protoheme IX farnesyltransferase from Xanthomonas oryzae pv. oryzae (strain MAFF 311018).